Reading from the N-terminus, the 205-residue chain is Thymidylate kinase (205 aa).

9-16 (GPEGSGKT) provides a ligand contact to ATP.

It belongs to the thymidylate kinase family.

The enzyme catalyses dTMP + ATP = dTDP + ADP. Its function is as follows. Phosphorylation of dTMP to form dTDP in both de novo and salvage pathways of dTTP synthesis. This Staphylococcus aureus (strain MSSA476) protein is Thymidylate kinase.